A 138-amino-acid chain; its full sequence is Putative pre-16S rRNA nuclease (138 aa).

Belongs to the YqgF nuclease family.

The protein localises to the cytoplasm. Its function is as follows. Could be a nuclease involved in processing of the 5'-end of pre-16S rRNA. This Azobacteroides pseudotrichonymphae genomovar. CFP2 protein is Putative pre-16S rRNA nuclease.